The primary structure comprises 892 residues: Alpha-actinin-1 (892 aa).

An N-acetylmethionine modification is found at Met1. The segment at Met1–His247 is actin-binding. Position 6 is a phosphoserine (Ser6). Tyr12 carries the phosphotyrosine; by FAK1 modification. 2 Calponin-homology (CH) domains span residues Lys31–Ala135 and Thr144–Ser250. 2 positions are modified to N6-acetyllysine: Lys95 and Lys195. Spectrin repeat units lie at residues Gln274–Asn384, His394–Arg499, Gln509–Glu620, and Arg630–Asn733. The tract at residues Gln274–Asn733 is interaction with DDN. Phosphoserine is present on Ser471. Residue Lys676 is modified to N6-acetyllysine. At Ser677 the chain carries Phosphoserine. EF-hand domains follow at residues Glu746–Asp781 and Gln787–Asp822. Ca(2+) contacts are provided by Asp759, Asp761, Ser763, Thr765, and Glu770. At Ser890 the chain carries Phosphoserine.

It belongs to the alpha-actinin family. In terms of assembly, homodimer; antiparallel. Interacts with MYOZ2, TTID and LPP. Interacts with DDN. Interacts with PSD. Interacts with MICALL2. Interacts with DNM2 and CTTN. Interacts with PDLIM1. Interacts with PDLIM2. Interacts with PDLIM4 (via PDZ domain). Interacts with IGSF8.

The protein localises to the cytoplasm. It is found in the cytoskeleton. Its subcellular location is the myofibril. The protein resides in the sarcomere. It localises to the z line. The protein localises to the cell membrane. It is found in the cell junction. Its subcellular location is the cell projection. The protein resides in the ruffle. F-actin cross-linking protein which is thought to anchor actin to a variety of intracellular structures. Association with IGSF8 regulates the immune synapse formation and is required for efficient T-cell activation. The sequence is that of Alpha-actinin-1 (ACTN1) from Macaca fascicularis (Crab-eating macaque).